Consider the following 693-residue polypeptide: Glycine--tRNA ligase beta subunit (693 aa).

It belongs to the class-II aminoacyl-tRNA synthetase family. In terms of assembly, tetramer of two alpha and two beta subunits.

It localises to the cytoplasm. It catalyses the reaction tRNA(Gly) + glycine + ATP = glycyl-tRNA(Gly) + AMP + diphosphate. This Vibrio vulnificus (strain CMCP6) protein is Glycine--tRNA ligase beta subunit.